The primary structure comprises 144 residues: Eukaryotic translation initiation factor 1A, X-chromosomal (144 aa).

The segment covering 1–15 has biased composition (basic residues); that stretch reads MPKNKGKGGKNRRRG. 2 disordered regions span residues 1-26 and 114-144; these read MPKNKGKGGKNRRRGKNENESEKREL and KINETDTFGPGDDDEIQFDDIGDDDEDIDDI. Positions 16–26 are enriched in basic and acidic residues; that stretch reads KNENESEKREL. Residues 22 to 96 form the S1-like domain; that stretch reads EKRELVFKED…NKADVILKYN (75 aa). Residues 124-144 are compositionally biased toward acidic residues; that stretch reads GDDDEIQFDDIGDDDEDIDDI.

Belongs to the eIF-1A family. Component of the 43S pre-initiation complex (43S PIC), which is composed of the 40S ribosomal subunit, EIF1, eIF1A (EIF1AX), eIF3 complex, EIF5 and eIF2-GTP-initiator tRNA complex (eIF2 ternary complex). Interacts with EIF5; this interaction contributes to the maintenance of EIF1 within the open 43S PIC. Interacts through its C-terminal domain (CTD) with the CTD of EIF5B; from the location of the start codon by the 43S complex until the formation of the 80S complex. In terms of assembly, (Microbial infection) Interacts with human respiratory syncytial virus (HRSV) nucleoprotein; this interaction recruits EIF1AX to the viral replication complex to facilitate viral genomic RNA synthesis and virus production.

It is found in the cytoplasm. In terms of biological role, component of the 43S pre-initiation complex (43S PIC), which binds to the mRNA cap-proximal region, scans mRNA 5'-untranslated region, and locates the initiation codon. This protein enhances formation of the cap-proximal complex. Together with EIF1, facilitates scanning, start codon recognition, promotion of the assembly of 48S complex at the initiation codon (43S PIC becomes 48S PIC after the start codon is reached), and dissociation of aberrant complexes. After start codon location, together with EIF5B orients the initiator methionine-tRNA in a conformation that allows 60S ribosomal subunit joining to form the 80S initiation complex. Is released after 80S initiation complex formation, just after GTP hydrolysis by EIF5B, and before release of EIF5B. Its globular part is located in the A site of the 40S ribosomal subunit. Its interaction with EIF5 during scanning contribute to the maintenance of EIF1 within the open 43S PIC. In contrast to yeast orthologs, does not bind EIF1. The sequence is that of Eukaryotic translation initiation factor 1A, X-chromosomal (EIF1AX) from Homo sapiens (Human).